Consider the following 396-residue polypeptide: L-tyrosine/L-aspartate decarboxylase (396 aa).

An N6-(pyridoxal phosphate)lysine modification is found at K245.

This sequence belongs to the group II decarboxylase family. MfnA subfamily. As to quaternary structure, homodimer. Pyridoxal 5'-phosphate is required as a cofactor.

The catalysed reaction is L-tyrosine + H(+) = tyramine + CO2. It carries out the reaction L-aspartate + H(+) = beta-alanine + CO2. The protein operates within cofactor biosynthesis; methanofuran biosynthesis. It functions in the pathway cofactor biosynthesis; coenzyme A biosynthesis. With respect to regulation, inhibited by hydroxylamine and O-methylhydroxylamine. Its function is as follows. Catalyzes the decarboxylation of L-tyrosine to produce tyramine for methanofuran biosynthesis. Can also catalyze the decarboxylation of L-aspartate to produce beta-alanine for coenzyme A (CoA) biosynthesis. The polypeptide is L-tyrosine/L-aspartate decarboxylase (Methanocaldococcus jannaschii (strain ATCC 43067 / DSM 2661 / JAL-1 / JCM 10045 / NBRC 100440) (Methanococcus jannaschii)).